A 188-amino-acid polypeptide reads, in one-letter code: Elongation factor P (188 aa).

The protein belongs to the elongation factor P family.

It is found in the cytoplasm. The protein operates within protein biosynthesis; polypeptide chain elongation. In terms of biological role, involved in peptide bond synthesis. Stimulates efficient translation and peptide-bond synthesis on native or reconstituted 70S ribosomes in vitro. Probably functions indirectly by altering the affinity of the ribosome for aminoacyl-tRNA, thus increasing their reactivity as acceptors for peptidyl transferase. The protein is Elongation factor P of Bacteroides thetaiotaomicron (strain ATCC 29148 / DSM 2079 / JCM 5827 / CCUG 10774 / NCTC 10582 / VPI-5482 / E50).